Consider the following 317-residue polypeptide: 4-hydroxy-3-methylbut-2-enyl diphosphate reductase (317 aa).

Cysteine 12 serves as a coordination point for [4Fe-4S] cluster. Residues histidine 41 and histidine 74 each contribute to the (2E)-4-hydroxy-3-methylbut-2-enyl diphosphate site. Residues histidine 41 and histidine 74 each contribute to the dimethylallyl diphosphate site. Isopentenyl diphosphate contacts are provided by histidine 41 and histidine 74. Residue cysteine 97 participates in [4Fe-4S] cluster binding. Position 125 (histidine 125) interacts with (2E)-4-hydroxy-3-methylbut-2-enyl diphosphate. Residue histidine 125 participates in dimethylallyl diphosphate binding. Position 125 (histidine 125) interacts with isopentenyl diphosphate. Glutamate 127 serves as the catalytic Proton donor. Threonine 168 provides a ligand contact to (2E)-4-hydroxy-3-methylbut-2-enyl diphosphate. Cysteine 198 serves as a coordination point for [4Fe-4S] cluster. (2E)-4-hydroxy-3-methylbut-2-enyl diphosphate-binding residues include serine 226, serine 227, asparagine 228, and serine 270. 4 residues coordinate dimethylallyl diphosphate: serine 226, serine 227, asparagine 228, and serine 270. Positions 226, 227, 228, and 270 each coordinate isopentenyl diphosphate.

This sequence belongs to the IspH family. Homodimer. Requires [4Fe-4S] cluster as cofactor.

It carries out the reaction isopentenyl diphosphate + 2 oxidized [2Fe-2S]-[ferredoxin] + H2O = (2E)-4-hydroxy-3-methylbut-2-enyl diphosphate + 2 reduced [2Fe-2S]-[ferredoxin] + 2 H(+). The enzyme catalyses dimethylallyl diphosphate + 2 oxidized [2Fe-2S]-[ferredoxin] + H2O = (2E)-4-hydroxy-3-methylbut-2-enyl diphosphate + 2 reduced [2Fe-2S]-[ferredoxin] + 2 H(+). It functions in the pathway isoprenoid biosynthesis; dimethylallyl diphosphate biosynthesis; dimethylallyl diphosphate from (2E)-4-hydroxy-3-methylbutenyl diphosphate: step 1/1. The protein operates within isoprenoid biosynthesis; isopentenyl diphosphate biosynthesis via DXP pathway; isopentenyl diphosphate from 1-deoxy-D-xylulose 5-phosphate: step 6/6. Its function is as follows. Catalyzes the conversion of 1-hydroxy-2-methyl-2-(E)-butenyl 4-diphosphate (HMBPP) into a mixture of isopentenyl diphosphate (IPP) and dimethylallyl diphosphate (DMAPP). Acts in the terminal step of the DOXP/MEP pathway for isoprenoid precursor biosynthesis. The protein is 4-hydroxy-3-methylbut-2-enyl diphosphate reductase of Yersinia pseudotuberculosis serotype IB (strain PB1/+).